The chain runs to 544 residues: Zinc finger protein 502 (544 aa).

A Glycyl lysine isopeptide (Lys-Gly) (interchain with G-Cter in SUMO2) cross-link involves residue Lys43. 14 C2H2-type zinc fingers span residues 155 to 177 (WKCN…QRTH), 183 to 205 (YTCE…QRIH), 211 to 233 (YGCE…QRIH), 239 to 261 (YKCN…QRIH), 267 to 289 (YKCN…QRIH), 295 to 317 (YICS…QRIH), 323 to 345 (HKCD…QRIH), 351 to 373 (YKCK…QRIH), 379 to 401 (YKCK…QRIH), 407 to 429 (YKCS…QRSH), 435 to 457 (YKCN…MRIH), 463 to 485 (YKCK…HRTH), 491 to 513 (YKCS…YRIH), and 519 to 541 (YECI…QKLH).

This sequence belongs to the krueppel C2H2-type zinc-finger protein family. As to quaternary structure, (Microbial infection) Interacts with human respiratory syncytial virus (HRSV) matrix protein; this interaction probably facilitates viral release.

It is found in the nucleus. Functionally, may be involved in transcriptional regulation. In Homo sapiens (Human), this protein is Zinc finger protein 502 (ZNF502).